We begin with the raw amino-acid sequence, 105 residues long: Small ribosomal subunit protein uS10 (105 aa).

This sequence belongs to the universal ribosomal protein uS10 family. As to quaternary structure, part of the 30S ribosomal subunit.

In terms of biological role, involved in the binding of tRNA to the ribosomes. The sequence is that of Small ribosomal subunit protein uS10 from Aster yellows witches'-broom phytoplasma (strain AYWB).